Consider the following 37-residue polypeptide: Large ribosomal subunit protein bL36c (37 aa).

The protein belongs to the bacterial ribosomal protein bL36 family.

Its subcellular location is the plastid. It localises to the chloroplast. This chain is Large ribosomal subunit protein bL36c, found in Bigelowiella natans (Pedinomonas minutissima).